We begin with the raw amino-acid sequence, 336 residues long: Anthranilate phosphoribosyltransferase (336 aa).

5-phospho-alpha-D-ribose 1-diphosphate is bound by residues Gly83, Gly86 to Asp87, Thr91, Asn93 to Thr96, Lys111 to Ser119, and Ser123. An anthranilate-binding site is contributed by Gly83. Mg(2+) is bound at residue Ser95. Asn114 contacts anthranilate. Arg169 serves as a coordination point for anthranilate. Mg(2+) contacts are provided by Asp227 and Glu228.

Belongs to the anthranilate phosphoribosyltransferase family. Homodimer. The cofactor is Mg(2+).

The catalysed reaction is N-(5-phospho-beta-D-ribosyl)anthranilate + diphosphate = 5-phospho-alpha-D-ribose 1-diphosphate + anthranilate. Its pathway is amino-acid biosynthesis; L-tryptophan biosynthesis; L-tryptophan from chorismate: step 2/5. In terms of biological role, catalyzes the transfer of the phosphoribosyl group of 5-phosphorylribose-1-pyrophosphate (PRPP) to anthranilate to yield N-(5'-phosphoribosyl)-anthranilate (PRA). This Vibrio campbellii (strain ATCC BAA-1116) protein is Anthranilate phosphoribosyltransferase.